Consider the following 119-residue polypeptide: uncharacterized protein (119 aa).

Helical transmembrane passes span isoleucine 7–valine 27 and tyrosine 32–leucine 52.

The protein resides in the membrane. This is an uncharacterized protein from Saccharomyces cerevisiae (strain ATCC 204508 / S288c) (Baker's yeast).